The following is an 841-amino-acid chain: Translation initiation factor IF-2 (841 aa).

A disordered region spans residues 94-255; the sequence is QRSPEEIEAE…RNAHGFQSPT (162 aa). The span at 96–135 shows a compositional bias: basic and acidic residues; it reads SPEEIEAERKREMDERRAVENAARQKAEEEAKRRAEEDAR. Residues 136 to 175 show a composition bias toward low complexity; the sequence is NQPAAGQPASAPAQPVAAAEPVREAPAAAAPAPASAAPSA. Basic and acidic residues-rich tracts occupy residues 176 to 217 and 225 to 234; these read DARK…EKAP and TTDEESDSFR. Positions 235-248 are enriched in basic residues; sequence RGGRGKGKLKKRNA. One can recognise a tr-type G domain in the interval 341-510; the sequence is SRAPVVTVMG…LLQAEVLELK (170 aa). The interval 350-357 is G1; it reads GHVDHGKT. 350 to 357 is a GTP binding site; that stretch reads GHVDHGKT. The interval 375–379 is G2; it reads GITQH. Residues 396 to 399 form a G3 region; sequence DTPG. GTP contacts are provided by residues 396 to 400 and 450 to 453; these read DTPGH and NKID. The segment at 450 to 453 is G4; that stretch reads NKID. The segment at 486–488 is G5; sequence SAK.

It belongs to the TRAFAC class translation factor GTPase superfamily. Classic translation factor GTPase family. IF-2 subfamily.

Its subcellular location is the cytoplasm. Functionally, one of the essential components for the initiation of protein synthesis. Protects formylmethionyl-tRNA from spontaneous hydrolysis and promotes its binding to the 30S ribosomal subunits. Also involved in the hydrolysis of GTP during the formation of the 70S ribosomal complex. The polypeptide is Translation initiation factor IF-2 (Pseudomonas syringae pv. tomato (strain ATCC BAA-871 / DC3000)).